We begin with the raw amino-acid sequence, 335 residues long: Hsp90 co-chaperone Cdc37-like 1 (335 aa).

Residues 1-11 (MEQPWPPPGPW) show a composition bias toward pro residues. The tract at residues 1–42 (MEQPWPPPGPWSFPRTGGETEEESDLDVSPSSSHYSPVPDGG) is disordered. The segment at 2–170 (EQPWPPPGPW…YEQKIRHFGM (169 aa)) is self-association. The segment covering 27–40 (DVSPSSSHYSPVPD) has biased composition (low complexity). Phosphoserine occurs at positions 32 and 88. The stretch at 84–120 (HNSESLDQEHAKAQTAVSELRQREEEWRQKEEALVQR) forms a coiled coil. Residues 147-276 (KTEEEDKSQS…SRVRLYAQSQ (130 aa)) are self-association and interaction with Hsp90. The tract at residues 266–335 (KSRVRLYAQS…EDDDRMMDTV (70 aa)) is interaction with Hsp70. The segment at 277–335 (SLQPVTVQNHVPHSGVGCIGSLESLPQNPDSLQCCTPAPLCSVDSVVHKEDDDRMMDTV) is required for interaction with STIP1.

It belongs to the CDC37 family. As to quaternary structure, self-associates. Forms complexes with Hsp70 and Hsp90. Interacts with CDC37, FKBP4, PPID and STIP1.

It localises to the cytoplasm. Co-chaperone that binds to numerous proteins and promotes their interaction with Hsp70 and Hsp90. This Mus musculus (Mouse) protein is Hsp90 co-chaperone Cdc37-like 1 (Cdc37l1).